Here is a 480-residue protein sequence, read N- to C-terminus: Glutamate--tRNA ligase (480 aa).

The 'HIGH' region motif lies at 21 to 31; sequence PSPTGYLHVGG. Over residues 122–146 the composition is skewed to basic and acidic residues; sequence NTQEQNKQKPRYDRHCLGDHKHSPE. Positions 122–149 are disordered; it reads NTQEQNKQKPRYDRHCLGDHKHSPEQPH. Positions 248–252 match the 'KMSKS' region motif; sequence KLSKR. Lysine 251 is a binding site for ATP.

Belongs to the class-I aminoacyl-tRNA synthetase family. Glutamate--tRNA ligase type 1 subfamily. Monomer.

It is found in the cytoplasm. It carries out the reaction tRNA(Glu) + L-glutamate + ATP = L-glutamyl-tRNA(Glu) + AMP + diphosphate. Catalyzes the attachment of glutamate to tRNA(Glu) in a two-step reaction: glutamate is first activated by ATP to form Glu-AMP and then transferred to the acceptor end of tRNA(Glu). This is Glutamate--tRNA ligase from Pasteurella multocida (strain Pm70).